Reading from the N-terminus, the 85-residue chain is Coiled-coil-helix-coiled-coil-helix domain-containing protein 7 (85 aa).

A CHCH domain is found at 13 to 55; that stretch reads INPCLSESDASTRCLDENNYDRERCSTYFLRYKNCRRFWNSIV. Short sequence motifs (cx9C motif) lie at residues 16-26 and 37-47; these read CLSESDASTRC and CSTYFLRYKNC. 2 disulfide bridges follow: C16–C47 and C26–C37.

The protein belongs to the CHCHD7 family. As to quaternary structure, monomer.

The protein localises to the mitochondrion intermembrane space. The protein is Coiled-coil-helix-coiled-coil-helix domain-containing protein 7 (CHCHD7) of Homo sapiens (Human).